The following is a 439-amino-acid chain: Acetyl esterase Axe7A (439 aa).

The first 31 residues, 1 to 31 (MFNFAPKQTTEMKKLLFTLVFVLGSMATALA), serve as a signal peptide directing secretion. Ser-309 (nucleophile) is an active-site residue. Catalysis depends on charge relay system residues Asp-391 and His-420.

Belongs to the carbohydrate esterase 7 family.

Its pathway is glycan degradation; xylan degradation. Its function is as follows. Involved in degradation of plant cell wall polysaccharides. Has acetyl esterase activity towards a broad range of substrates including xylose-tetraacetate, 4-O-methylumbelliferyl acetate, glucose-pentaacetate, cephalosporin C, and acetylated xylo-oligosaccharides smaller than xylo-heptaose. Displays no detectable activity on polymeric acetylated xylan. The polypeptide is Acetyl esterase Axe7A (Xylanibacter ruminicola (strain ATCC 19189 / DSM 19721 / CIP 105475 / JCM 8958 / 23) (Prevotella ruminicola)).